An 863-amino-acid chain; its full sequence is DNA replication licensing factor mcm4-B (863 aa).

Residues 1 to 130 (MSSPTSTPSR…ARKVKQVDLH (130 aa)) form a disordered region. 2 stretches are compositionally biased toward polar residues: residues 54 to 64 (SPSGDVQSPSG) and 84 to 99 (LDLSSPLTYGTPSSRV). The C4-type zinc finger occupies 306-331 (CQVCAFTTRVEIDRGRIAEPSVCKHC). An MCM domain is found at 458 to 667 (IYERLAAALA…YDRRLAHHLV (210 aa)). ATP is bound by residues Y471, R497, K516, S517, N618, R643, R732, and E735. Positions 642–645 (SRFD) match the Arginine finger motif.

It belongs to the MCM family. As to quaternary structure, component of the mcm2-7 complex (RLF-M). The complex forms a toroidal hexameric ring with the proposed subunit order mcm2-mcm6-mcm4-mcm7-mcm3-mcm5. The heterodimer of mmcm3/mcm5 interacts with mcm4, mmcm6, mcm7 and weakly with mcm2. Begins to associate with zmcm6 at the neurula stage. Component of the CMG helicase complex, composed of the mcm2-7 complex, the GINS complex and cdc45. In terms of processing, hyperphosphorylated during mitosis in a mechanism requiring cdc2-cyclin B and other kinases. Undergoes dephosphorylation after exiting mitosis, existing in a partially phosphorylated state in the cytosolic interphase mcm complex which associates with the pre-replication complexes (pre-Rcs). Complete dephosphorylation inactivates the mcm complex, preventing its binding to chromatin. Becomes actively phosphorylated during S phase once the mcm complex is assembled on the chromatin. This chromatin-associated phosphorylation occurs during the activation of the pre-Rcs and is independent of cdks. Phosphorylated by the cdc7-dbf4b complex.

It localises to the nucleus. Its subcellular location is the chromosome. It catalyses the reaction ATP + H2O = ADP + phosphate + H(+). In terms of biological role, acts as a component of the MCM2-7 complex (MCM complex) which is the replicative helicase essential for 'once per cell cycle' DNA replication initiation and elongation in eukaryotic cells. Core component of CDC45-MCM-GINS (CMG) helicase, the molecular machine that unwinds template DNA during replication, and around which the replisome is built. The active ATPase sites in the MCM2-7 ring are formed through the interaction surfaces of two neighboring subunits such that a critical structure of a conserved arginine finger motif is provided in trans relative to the ATP-binding site of the Walker A box of the adjacent subunit. The six ATPase active sites, however, are likely to contribute differentially to the complex helicase activity. This Xenopus laevis (African clawed frog) protein is DNA replication licensing factor mcm4-B (mcm4-b).